The primary structure comprises 412 residues: Acetate kinase (412 aa).

Residue N10 participates in Mg(2+) binding. K17 serves as a coordination point for ATP. The disordered stretch occupies residues 40–61; sequence ETSRLAHTPSAGGGAEPRERTG. Position 95 (R95) interacts with substrate. D152 (proton donor/acceptor) is an active-site residue. ATP contacts are provided by residues 212-216, 286-288, and 334-338; these read HLGNG, DMR, and GVGEN. Residue E388 participates in Mg(2+) binding.

It belongs to the acetokinase family. In terms of assembly, homodimer. The cofactor is Mg(2+). Mn(2+) serves as cofactor.

The protein localises to the cytoplasm. It catalyses the reaction acetate + ATP = acetyl phosphate + ADP. The protein operates within metabolic intermediate biosynthesis; acetyl-CoA biosynthesis; acetyl-CoA from acetate: step 1/2. In terms of biological role, catalyzes the formation of acetyl phosphate from acetate and ATP. Can also catalyze the reverse reaction. The protein is Acetate kinase of Streptomyces griseus subsp. griseus (strain JCM 4626 / CBS 651.72 / NBRC 13350 / KCC S-0626 / ISP 5235).